The following is a 373-amino-acid chain: 3 beta-hydroxysteroid dehydrogenase/Delta 5--&gt;4-isomerase type 3 (373 aa).

Tyr-155 (proton acceptor) is an active-site residue. Lys-159 contacts NAD(+). The helical transmembrane segment at 288 to 308 threads the bilayer; that stretch reads VPILYWLAFLLETVSFLLSPI.

Belongs to the 3-beta-HSD family. As to expression, liver and kidney. Greater expression in liver.

It localises to the endoplasmic reticulum membrane. It is found in the mitochondrion membrane. It catalyses the reaction a 3beta-hydroxy-Delta(5)-steroid + NAD(+) = a 3-oxo-Delta(5)-steroid + NADH + H(+). It carries out the reaction a 3-oxo-Delta(5)-steroid = a 3-oxo-Delta(4)-steroid. It functions in the pathway lipid metabolism; steroid biosynthesis. 3-beta-HSD is a bifunctional enzyme, that catalyzes the oxidative conversion of Delta(5)-ene-3-beta-hydroxy steroid, and the oxidative conversion of ketosteroids. The 3-beta-HSD enzymatic system plays a crucial role in the biosynthesis of all classes of hormonal steroids. This chain is 3 beta-hydroxysteroid dehydrogenase/Delta 5--&gt;4-isomerase type 3 (Hsd3b3), found in Mus musculus (Mouse).